Consider the following 123-residue polypeptide: Large ribosomal subunit protein uL29 (123 aa).

Lys-19 carries the N6-acetyllysine modification. Lys-25 participates in a covalent cross-link: Glycyl lysine isopeptide (Lys-Gly) (interchain with G-Cter in SUMO2). Residue Ser-29 is modified to Phosphoserine. Residue Lys-43 is modified to N6-acetyllysine. The interval 100–123 (EKLKTKKQQRKERLYPLRKYAVKA) is disordered.

Belongs to the universal ribosomal protein uL29 family. Component of the large ribosomal subunit.

The protein resides in the cytoplasm. In terms of biological role, component of the large ribosomal subunit. The ribosome is a large ribonucleoprotein complex responsible for the synthesis of proteins in the cell. The sequence is that of Large ribosomal subunit protein uL29 (Rpl35) from Mus musculus (Mouse).